A 1151-amino-acid chain; its full sequence is Chromosome partition protein Smc (1151 aa).

32–39 (PNGCGKSN) contacts ATP. Coiled coils occupy residues 170–218 (ISGL…AARY), 342–379 (IGRLEWEREALETAHEGHEERLAEAAEAAREAGAALGE), 407–508 (DSRT…REAQ), and 633–994 (LKQL…EGRE). Composition is skewed to basic and acidic residues over residues 421-438 (RARETVEAAAEAQERAAE) and 465-480 (DEARAEAQSREAEARA). Disordered regions lie at residues 421–483 (RARE…AQRS), 806–826 (SAELAERKAETEEALREAAEA), and 862–889 (LRAAQEAEREAERQAGESREARARAEAR). Positions 866–889 (QEAEREAERQAGESREARARAEAR) are enriched in basic and acidic residues.

Belongs to the SMC family. In terms of assembly, homodimer.

It localises to the cytoplasm. Required for chromosome condensation and partitioning. This chain is Chromosome partition protein Smc, found in Cereibacter sphaeroides (strain ATCC 17029 / ATH 2.4.9) (Rhodobacter sphaeroides).